Reading from the N-terminus, the 338-residue chain is tRNA(Ile)-lysidine synthase (338 aa).

23 to 28 (SGGLDS) provides a ligand contact to ATP.

The protein belongs to the tRNA(Ile)-lysidine synthase family.

Its subcellular location is the cytoplasm. It catalyses the reaction cytidine(34) in tRNA(Ile2) + L-lysine + ATP = lysidine(34) in tRNA(Ile2) + AMP + diphosphate + H(+). Its function is as follows. Ligates lysine onto the cytidine present at position 34 of the AUA codon-specific tRNA(Ile) that contains the anticodon CAU, in an ATP-dependent manner. Cytidine is converted to lysidine, thus changing the amino acid specificity of the tRNA from methionine to isoleucine. This Helicobacter pylori (strain J99 / ATCC 700824) (Campylobacter pylori J99) protein is tRNA(Ile)-lysidine synthase.